The following is a 732-amino-acid chain: Elongation factor 2 (732 aa).

The 210-residue stretch at 19 to 228 (ELIRNIGIVA…TKITFKDIVE (210 aa)) folds into the tr-type G domain. GTP contacts are provided by residues 28 to 35 (AHIDHGKT), 94 to 98 (DTPGH), and 148 to 151 (NKID). His598 carries the post-translational modification Diphthamide.

Belongs to the TRAFAC class translation factor GTPase superfamily. Classic translation factor GTPase family. EF-G/EF-2 subfamily.

It is found in the cytoplasm. Functionally, catalyzes the GTP-dependent ribosomal translocation step during translation elongation. During this step, the ribosome changes from the pre-translocational (PRE) to the post-translocational (POST) state as the newly formed A-site-bound peptidyl-tRNA and P-site-bound deacylated tRNA move to the P and E sites, respectively. Catalyzes the coordinated movement of the two tRNA molecules, the mRNA and conformational changes in the ribosome. In Thermoplasma acidophilum (strain ATCC 25905 / DSM 1728 / JCM 9062 / NBRC 15155 / AMRC-C165), this protein is Elongation factor 2 (fusA).